We begin with the raw amino-acid sequence, 1839 residues long: Mannuronan C5-epimerase AlgE3 (1839 aa).

PbH1 repeat units lie at residues 133-155, 157-179, 180-202, 204-226, 257-279, 280-302, 320-342, and 347-369; these read DRDV…DPHE, TINL…VADY, QVGG…NIVT, TNDF…VVQR, THDV…RVYG, AQDV…YAEV, TTGT…GIQE, and TDYS…RLYG. A compositionally biased stretch (polar residues) spans 372–386; sequence STVSEQPSSGQQATL. A disordered region spans residues 372–392; that stretch reads STVSEQPSSGQQATLEGTAGN. Hemolysin-type calcium-binding repeat units follow at residues 387–399, 406–422, 424–440, 538–550, 557–573, 574–591, 695–709, 714–730, and 732–748; these read EGTA…SGTG, GLAG…DDTL, GGAG…ADTF, TGTE…SGTD, GYGG…NDIL, VGGA…ADVF, EGTD…TGAD, GLGG…DDVL, and GGAE…ADTF. PbH1 repeat units follow at residues 975–997, 999–1021, 1022–1044, 1046–1068, 1099–1121, 1122–1143, 1161–1183, and 1188–1210; these read DRNV…DPHE, TINL…VADY, LVDS…NVVT, TYDF…VIQR, TNNI…RLYG, TEDV…AYAE, TTGT…GIEE, and TDYS…RLNG. A compositionally biased stretch (polar residues) spans 1215–1236; that stretch reads VSDQPGTGQQATLEGTTGNDTL. Residues 1215-1238 are disordered; that stretch reads VSDQPGTGQQATLEGTTGNDTLGG. Hemolysin-type calcium-binding repeat units lie at residues 1229–1243, 1247–1263, 1265–1281, 1398–1414, 1415–1432, 1536–1552, 1554–1571, 1670–1681, 1688–1704, and 1706–1722; these read GTTG…DAHE, GLDG…NDIL, GGVG…ADTF, GHAG…DDIL, VGGA…ADVF, EGTA…ADEV, HGGS…ADVF, GGDGNDTLSGGS, GGAG…NDIL, and GGAG…SDIF.

The protein belongs to the D-mannuronate C5-epimerase family. Ca(2+) serves as cofactor.

It localises to the secreted. The catalysed reaction is [(1-&gt;4)-beta-D-mannuronosyl](n) = [alginate](n). Its pathway is glycan biosynthesis; alginate biosynthesis. With respect to regulation, inhibited by zinc. Functionally, converts beta-D-mannuronic acid (M) to alpha-L-guluronic acid (G), producing a polymer with gel-forming capacity, required for the formation of the cyst coat. This chain is Mannuronan C5-epimerase AlgE3, found in Azotobacter vinelandii.